A 79-amino-acid polypeptide reads, in one-letter code: MRLSIRAIVLFALVWIGLLMSGYGVLVGSKVNAAGLVLQCHYLTARGTSTAQYLHTNSGIIGFSDCPIFRKIATVVDNG.

The signal sequence occupies residues 1 to 33 (MRLSIRAIVLFALVWIGLLMSGYGVLVGSKVNA).

This is an uncharacterized protein from Salmonella paratyphi A (strain ATCC 9150 / SARB42).